The primary structure comprises 98 residues: Integration host factor subunit alpha (98 aa).

The tract at residues 49 to 70 (FGNFDLRDKNQRPGRNPKTGED) is disordered.

Belongs to the bacterial histone-like protein family. As to quaternary structure, heterodimer of an alpha and a beta chain.

In terms of biological role, this protein is one of the two subunits of integration host factor, a specific DNA-binding protein that functions in genetic recombination as well as in transcriptional and translational control. The chain is Integration host factor subunit alpha from Yersinia pestis.